Consider the following 312-residue polypeptide: MSVIDQNAIAVGPRISEADVGDYLALLKPRVMSLVIFTALIGLLIAPGHFHPVLAITSLLCIAVGAGASGALNMALEGDIDSLMSRTANRPIPRGRVTRQEALAFGITLSFFSVLTLGILVNWYAGALLAFTIFFYVVIYTLWLKRWTAQNIVIGGAAGALPPVVAWVAATGSIAPEPLLLFLIIFFWTPPHFWALALFRSDDYARAGVPMLPVVAGPDATRLQILLYTILLVAIAAAPWPLGYFDAVYGVVSLALGAGMLWFAIEVFRKRERSQSLRANRKLFAFSILYLFALFATLGLEAVARMIAPLIW.

Helical transmembrane passes span 34–54, 56–76, 119–139, 152–172, 179–199, 225–245, 248–268, and 283–303; these read LVIFTALIGLLIAPGHFHPVL, ITSLLCIAVGAGASGALNMAL, ILVNWYAGALLAFTIFFYVVI, IVIGGAAGALPPVVAWVAATG, LLLFLIIFFWTPPHFWALALF, ILLYTILLVAIAAAPWPLGYF, VYGVVSLALGAGMLWFAIEVF, and LFAFSILYLFALFATLGLEAV.

This sequence belongs to the UbiA prenyltransferase family. Protoheme IX farnesyltransferase subfamily.

The protein localises to the cell inner membrane. The catalysed reaction is heme b + (2E,6E)-farnesyl diphosphate + H2O = Fe(II)-heme o + diphosphate. It functions in the pathway porphyrin-containing compound metabolism; heme O biosynthesis; heme O from protoheme: step 1/1. Functionally, converts heme B (protoheme IX) to heme O by substitution of the vinyl group on carbon 2 of heme B porphyrin ring with a hydroxyethyl farnesyl side group. This chain is Protoheme IX farnesyltransferase, found in Bradyrhizobium sp. (strain BTAi1 / ATCC BAA-1182).